The sequence spans 176 residues: Large ribosomal subunit protein uL16 (176 aa).

The protein belongs to the universal ribosomal protein uL16 family.

This Sulfolobus acidocaldarius (strain ATCC 33909 / DSM 639 / JCM 8929 / NBRC 15157 / NCIMB 11770) protein is Large ribosomal subunit protein uL16.